The sequence spans 123 residues: Large ribosomal subunit protein uL29 (123 aa).

This sequence belongs to the universal ribosomal protein uL29 family. Component of the large ribosomal subunit.

It localises to the cytoplasm. In terms of biological role, component of the large ribosomal subunit. The ribosome is a large ribonucleoprotein complex responsible for the synthesis of proteins in the cell. This Ictalurus punctatus (Channel catfish) protein is Large ribosomal subunit protein uL29 (rpl35).